The following is a 439-amino-acid chain: Xylose isomerase (439 aa).

Active-site residues include His101 and Asp104. Mg(2+) is bound by residues Glu232, Glu268, His271, Asp296, Asp307, Asp309, and Asp339.

The protein belongs to the xylose isomerase family. In terms of assembly, homotetramer. The cofactor is Mg(2+).

It localises to the cytoplasm. The catalysed reaction is alpha-D-xylose = alpha-D-xylulofuranose. This is Xylose isomerase from Photobacterium profundum (strain SS9).